Here is a 362-residue protein sequence, read N- to C-terminus: Type-2 angiotensin II receptor (362 aa).

Over 1-44 (MKANFSLATISKNITSSLHVGFVNISSNESTFNCSHKPSDKHLD) the chain is Extracellular. 5 N-linked (GlcNAc...) asparagine glycosylation sites follow: Asn-4, Asn-13, Asn-24, Asn-28, and Asn-33. Disulfide bonds link Cys-34/Cys-289 and Cys-116/Cys-194. The chain crosses the membrane as a helical span at residues 45-69 (AIPVLYYIIFGVGFLVNTIVVTLFC). Residues 70–79 (CQKGPKKVSS) are Cytoplasmic-facing. Residues 80–103 (IYIFNLAVADLLLLATLPLWATYY) form a helical membrane-spanning segment. Tyr-102 and Tyr-103 together coordinate angiotensin II. Topologically, residues 104–113 (SHRYDWIFGP) are extracellular. A helical transmembrane segment spans residues 114–139 (VMCKVFGSFLTLNMFASIFFITCMSV). Residues 140–158 (DRYQSVIYPFLSQRRNPWQ) are Cytoplasmic-facing. Residues 159 to 180 (ASYIVPLVWCMACLSSLPTFYF) traverse the membrane as a helical segment. Residues Arg-181, Tyr-203, and Lys-214 each coordinate angiotensin II. At 181–205 (RDVRTIEYLGVNACIMAFPPEKYAQ) the chain is on the extracellular side. The helical transmembrane segment at 206-231 (WSAGIALMKNILGFIIPLIFIATCYF) threads the bilayer. At 232–256 (GIRKHLLKTNSYGKNRITRDQVLKM) the chain is on the cytoplasmic side. A helical transmembrane segment spans residues 257-280 (AAAVVLAFIICWLPFHVLTFLDAL). Residue Asp-278 participates in angiotensin II binding. The Extracellular segment spans residues 281-293 (AWMGVINSCEVIA). The helical transmembrane segment at 294 to 319 (VIDLALPFAILLGFTNSCINPFLYCF) threads the bilayer. An angiotensin II-binding site is contributed by Asp-296. Residues 320-362 (VGNRFQQKLRRVFRVPITWLQGKRENGSCGKSSSFREMETFVS) are Cytoplasmic-facing. The segment at 323–332 (RFQQKLRRVF) is helix VIII.

This sequence belongs to the G-protein coupled receptor 1 family. As to quaternary structure, interacts with MTUS1.

It is found in the cell membrane. In terms of biological role, receptor for angiotensin II, a vasoconstricting peptide. Signals primarily via a non-canonical G-protein- and beta-arrestin independent pathways. Cooperates with MTUS1 to inhibit ERK2 activation and cell proliferation. In Ovis aries (Sheep), this protein is Type-2 angiotensin II receptor (AGTR2).